Reading from the N-terminus, the 111-residue chain is Cytochrome c (111 aa).

An N-acetylalanine modification is found at Ala1. Residues Cys22, Cys25, and His26 each contribute to the heme c site. N6,N6,N6-trimethyllysine is present on Lys80. Met88 is a binding site for heme c. Residue Lys94 is modified to N6,N6,N6-trimethyllysine.

Belongs to the cytochrome c family. Binds 1 heme c group covalently per subunit.

It localises to the mitochondrion intermembrane space. In terms of biological role, electron carrier protein. The oxidized form of the cytochrome c heme group can accept an electron from the heme group of the cytochrome c1 subunit of cytochrome reductase. Cytochrome c then transfers this electron to the cytochrome oxidase complex, the final protein carrier in the mitochondrial electron-transport chain. The polypeptide is Cytochrome c (Cannabis sativa (Hemp)).